Consider the following 244-residue polypeptide: Large ribosomal subunit protein uL30B (244 aa).

Positions 1–11 are enriched in polar residues; that stretch reads MSTEKILTPES. The interval 1-21 is disordered; sequence MSTEKILTPESQLKKTKAQQK.

Belongs to the universal ribosomal protein uL30 family. As to quaternary structure, component of the large ribosomal subunit (LSU). Mature yeast ribosomes consist of a small (40S) and a large (60S) subunit. The 40S small subunit contains 1 molecule of ribosomal RNA (18S rRNA) and 33 different proteins (encoded by 57 genes). The large 60S subunit contains 3 rRNA molecules (25S, 5.8S and 5S rRNA) and 46 different proteins (encoded by 81 genes).

It localises to the cytoplasm. Component of the ribosome, a large ribonucleoprotein complex responsible for the synthesis of proteins in the cell. The small ribosomal subunit (SSU) binds messenger RNAs (mRNAs) and translates the encoded message by selecting cognate aminoacyl-transfer RNA (tRNA) molecules. The large subunit (LSU) contains the ribosomal catalytic site termed the peptidyl transferase center (PTC), which catalyzes the formation of peptide bonds, thereby polymerizing the amino acids delivered by tRNAs into a polypeptide chain. The nascent polypeptides leave the ribosome through a tunnel in the LSU and interact with protein factors that function in enzymatic processing, targeting, and the membrane insertion of nascent chains at the exit of the ribosomal tunnel. This chain is Large ribosomal subunit protein uL30B, found in Saccharomyces cerevisiae (strain ATCC 204508 / S288c) (Baker's yeast).